The primary structure comprises 2548 residues: Variant-silencing SET domain-containing protein (2548 aa).

Residues 37–48 (IDDDDDDDNDNN) show a composition bias toward acidic residues. Disordered regions lie at residues 37–61 (IDDD…KTNN), 336–379 (GDPK…DDDN), and 585–629 (SVDR…NTQT). Over residues 336-357 (GDPKKRIERNKQEIEDHRREQD) the composition is skewed to basic and acidic residues. Acidic residues predominate over residues 358-378 (GENDQEEDNYDDYDDEDDDDD). Over residues 602 to 616 (NGSNNNNSSSNNNNN) the composition is skewed to low complexity. The segment covering 617–629 (ITHITNDCDNTQT) has biased composition (polar residues). The segment at 787–846 (FYLCEFCEQNIFDMNNMIKKDKAKECMYRCNISCGRTFHKACVCYIKNNDNYICFFCLYD) adopts a PHD-type 1 zinc-finger fold. Over residues 929 to 944 (IKRRHIYRKRRRRGPR) the composition is skewed to basic residues. 4 disordered regions span residues 929–1054 (IKRR…CDEN), 1546–1575 (EKNT…NTLD), 1713–1732 (EQGS…NNAK), and 1772–1822 (INNA…DDHR). Residues 986–1016 (DNNDDNNDNNDDNNDNNDDNNDNNDNNDDNN) show a composition bias toward acidic residues. 2 stretches are compositionally biased toward low complexity: residues 1017–1050 (NDNN…NNNN) and 1551–1572 (NKLC…TKYN). Over residues 1714–1732 (QGSINNAKHNEQGSINNAK) the composition is skewed to polar residues. Positions 2067-2117 (SDDYKCLCQGECNLYTCYNSLSNIQCSKSRCNLPEKIQDRKCFNRPFRKSF) constitute an AWS domain. The 122-residue stretch at 2119–2240 (KDLEIKKTEK…SGEEITYNYS (122 aa)) folds into the SET domain. S-adenosyl-L-methionine is bound at residue Tyr2239. Residues 2423-2471 (DEVCRKCKSCGNLTMCDKCFQSYHQLCGNMHSKMYKNNELVLCRFCQKY) form a PHD-type 2 zinc finger.

It belongs to the class V-like SAM-binding methyltransferase superfamily.

It is found in the nucleus. The protein localises to the chromosome. The enzyme catalyses L-lysyl(36)-[histone H3] + 3 S-adenosyl-L-methionine = N(6),N(6),N(6)-trimethyl-L-lysyl(36)-[histone H3] + 3 S-adenosyl-L-homocysteine + 3 H(+). Functionally, histone methyltransferase that specifically represses expression of the surface antigen-coding var genes by mediating trimethylation of 'Lys-36' of histone H3 (H3K36me3) on var genes. SETVS-dependent H3K36me3 is specifically involved in var genes silencing, a central step malaria pathogenesis: each parasite contains 60 distinct var genes that each code for a different PfEMP1 protein. During infection, the clonal parasite population expresses only 1 gene at a time, while the 59 other var genes are silenced. The parasite then switches to the expression of a new variant antigen as an immune-evasion mechanism to avoid the host antibody response. Represses expression of both var mRNA and antisense long non-coding RNA. This is Variant-silencing SET domain-containing protein (SETVS) from Plasmodium falciparum (isolate 3D7).